The following is a 134-amino-acid chain: Small ribosomal subunit protein bS6 (134 aa).

The segment at 103-134 (AAPVKSAEEGTEEVAAEAATEAPAETTTTVEV) is disordered. The span at 118–134 (AEAATEAPAETTTTVEV) shows a compositional bias: low complexity.

Belongs to the bacterial ribosomal protein bS6 family.

In terms of biological role, binds together with bS18 to 16S ribosomal RNA. The polypeptide is Small ribosomal subunit protein bS6 (Geobacter sp. (strain M21)).